The primary structure comprises 522 residues: E3 ubiquitin-protein ligase TRIM65 (522 aa).

The residue at position 2 (alanine 2) is an N-acetylalanine. The RING-type zinc finger occupies 13-52 (CSICLGRYRDPVTLPCGHSFCGNCIQDSWRSCEKSCPECR). Residues 92-134 (SHSARCLRHGRPLEFFCRTEGLCVCSACTVHDCSHHERALLDV) form a B box-type zinc finger. Residues 141-229 (DQLRARVLVT…QRLTDHLRAL (89 aa)) adopt a coiled-coil conformation. Phosphoserine is present on serine 187. A B30.2/SPRY domain is found at 316–509 (APVPSAVCPL…LTLCHQPEAT (194 aa)).

The protein belongs to the TRIM/RBCC family. As to quaternary structure, homo-multimerizes. Interacts with ARRDC4.

It is found in the cytoplasm. The enzyme catalyses S-ubiquitinyl-[E2 ubiquitin-conjugating enzyme]-L-cysteine + [acceptor protein]-L-lysine = [E2 ubiquitin-conjugating enzyme]-L-cysteine + N(6)-ubiquitinyl-[acceptor protein]-L-lysine.. It participates in protein modification; protein ubiquitination. E3 ubiquitin ligase that plays a role in several processes including innate immnity, autophagy or inflammation. Negatively regulates miRNAs by modulating the ubiquitination and stability of TNRC6A, a protein involved in RNA-mediated gene silencing by both micro-RNAs (miRNAs) and short interfering RNAs. This ubiquitination results in the suppressed expression of miR-138-5p leading to increased autophagy. Upon enteroviral infection, promotes 'Lys-63'-mediated ubiquitination activation of IFIH1/MDA5 leading to innate signaling cascade. Mechanistically, selectively recognizes MDA5 filaments that occur on dsRNAs. Also plays a role in limitation of inflammation through different mechanisms. First, promotes 'Lys-48'-mediated ubiquitination of VCAM1 leading to its degradation and limitation of LPS-induced lung inflammation. In addition, negatively regulates inflammasome activation by promoting 'lys48'-linked ubiquitination of NLRP3 which is critical for the inhibition of NLRP3 inflammasome activation in resting macrophages. This Mus musculus (Mouse) protein is E3 ubiquitin-protein ligase TRIM65 (Trim65).